The primary structure comprises 240 residues: MQQASTPTIGMIVPPAAGLVPADGARLYPDLPFIASGLGLGSVTPEGYDAVIESVVDHARRLQKQGAAVVSLMGTSLSFYRGAAFNAALTVAMREATGLPCTTMSTAVLNGLRALGVRRVALATAYIDDVNERLAAFLAEESLVPTGCRSLGITGVEAMARVDTATLVDLCVRAFEAAPDSDGILLSCGGLLTLDAIPEVERRLGVPVVSSSPAGFWDAVRLAGGGAKARPGYGRLFDES.

It carries out the reaction 2-aryl-2-methylmalonate + H(+) = 2-arylpropionate + CO2. The sequence is that of Arylmalonate decarboxylase from Bordetella bronchiseptica (Alcaligenes bronchisepticus).